Consider the following 158-residue polypeptide: 6,7-dimethyl-8-ribityllumazine synthase (158 aa).

5-amino-6-(D-ribitylamino)uracil-binding positions include Phe23, 61–63 (SFE), and 85–87 (AVI). 90-91 (ET) serves as a coordination point for (2S)-2-hydroxy-3-oxobutyl phosphate. The active-site Proton donor is the His93. Phe118 serves as a coordination point for 5-amino-6-(D-ribitylamino)uracil. Arg132 is a binding site for (2S)-2-hydroxy-3-oxobutyl phosphate.

It belongs to the DMRL synthase family.

It catalyses the reaction (2S)-2-hydroxy-3-oxobutyl phosphate + 5-amino-6-(D-ribitylamino)uracil = 6,7-dimethyl-8-(1-D-ribityl)lumazine + phosphate + 2 H2O + H(+). The protein operates within cofactor biosynthesis; riboflavin biosynthesis; riboflavin from 2-hydroxy-3-oxobutyl phosphate and 5-amino-6-(D-ribitylamino)uracil: step 1/2. In terms of biological role, catalyzes the formation of 6,7-dimethyl-8-ribityllumazine by condensation of 5-amino-6-(D-ribitylamino)uracil with 3,4-dihydroxy-2-butanone 4-phosphate. This is the penultimate step in the biosynthesis of riboflavin. This chain is 6,7-dimethyl-8-ribityllumazine synthase, found in Prochlorococcus marinus (strain MIT 9515).